The primary structure comprises 97 residues: Aspartyl/glutamyl-tRNA(Asn/Gln) amidotransferase subunit C (97 aa).

It belongs to the GatC family. Heterotrimer of A, B and C subunits.

The enzyme catalyses L-glutamyl-tRNA(Gln) + L-glutamine + ATP + H2O = L-glutaminyl-tRNA(Gln) + L-glutamate + ADP + phosphate + H(+). It carries out the reaction L-aspartyl-tRNA(Asn) + L-glutamine + ATP + H2O = L-asparaginyl-tRNA(Asn) + L-glutamate + ADP + phosphate + 2 H(+). Functionally, allows the formation of correctly charged Asn-tRNA(Asn) or Gln-tRNA(Gln) through the transamidation of misacylated Asp-tRNA(Asn) or Glu-tRNA(Gln) in organisms which lack either or both of asparaginyl-tRNA or glutaminyl-tRNA synthetases. The reaction takes place in the presence of glutamine and ATP through an activated phospho-Asp-tRNA(Asn) or phospho-Glu-tRNA(Gln). The polypeptide is Aspartyl/glutamyl-tRNA(Asn/Gln) amidotransferase subunit C (Thermosynechococcus vestitus (strain NIES-2133 / IAM M-273 / BP-1)).